The chain runs to 60 residues: UPF0337 protein SAV1625 (60 aa).

The interval 18 to 41 (VGNVTDNKELEKEGQQDKATGKAK) is disordered. Residues 23–41 (DNKELEKEGQQDKATGKAK) show a composition bias toward basic and acidic residues.

This sequence belongs to the UPF0337 (CsbD) family.

The chain is UPF0337 protein SAV1625 from Staphylococcus aureus (strain Mu50 / ATCC 700699).